A 648-amino-acid chain; its full sequence is Pumilio homolog 3 (648 aa).

The interval Met1 to Arg124 is disordered. Over residues Ala17–Ser27 the composition is skewed to basic and acidic residues. Residue Lys33 is modified to N6-acetyllysine. The segment covering Leu60–Lys69 has biased composition (basic residues). Residues Phe94–Arg124 are compositionally biased toward basic and acidic residues. The short motif at Lys106–Lys118 is the Nuclear localization signal element. A PUM-HD domain is found at Glu143 to Leu510. Pumilio repeat units lie at residues His177–Ala212, Lys213–His248, Ala249–Gly277, Arg289–His325, Ser326–Thr361, His362–Gly397, Gln398–Asp435, Lys436–Asp504, Lys505–His551, Pro552–Val596, and Asn597–Ser636. Residues Arg289–Val297 are HA-8.

As to quaternary structure, interacts with PARP1 (via catalytic domain). Widely expressed.

It is found in the nucleus. Its subcellular location is the nucleolus. It localises to the nucleoplasm. The protein localises to the chromosome. Functionally, inhibits the poly(ADP-ribosyl)ation activity of PARP1 and the degradation of PARP1 by CASP3 following genotoxic stress. Binds to double-stranded RNA or DNA without sequence specificity. Involved in development of the eye and of primordial germ cells. The polypeptide is Pumilio homolog 3 (Homo sapiens (Human)).